The sequence spans 1755 residues: Transposon Ty1-GR1 Gag-Pol polyprotein (1755 aa).

Over residues M1–S16 the composition is skewed to low complexity. Disordered stretches follow at residues M1–Q93, P126–P173, and G352–T421. 3 stretches are compositionally biased toward polar residues: residues T48–S60, S71–Q93, and Q127–F152. A compositionally biased stretch (low complexity) spans T153–T165. The RNA-binding stretch occupies residues N299–H401. The segment covering N402 to S418 has biased composition (low complexity). Position 416 is a phosphoserine (S416). D461 serves as the catalytic For protease activity; shared with dimeric partner. The segment at N583–C640 is integrase-type zinc finger-like. The Integrase catalytic domain occupies N660–P835. D671 and D736 together coordinate Mg(2+). Disordered regions lie at residues S956–K1087, R1092–P1111, and D1130–T1187. The span at S960–T969 shows a compositional bias: low complexity. Residues S1005–T1015 are compositionally biased toward polar residues. The segment covering E1038–S1053 has biased composition (basic and acidic residues). Composition is skewed to polar residues over residues Y1054–D1082 and P1101–P1111. A Bipartite nuclear localization signal motif is present at residues K1178 to R1212. The 139-residue stretch at N1338–Q1476 folds into the Reverse transcriptase Ty1/copia-type domain. Mg(2+) is bound by residues D1346, D1427, D1428, D1610, E1652, and D1685. The RNase H Ty1/copia-type domain maps to D1610–K1752.

In terms of assembly, the capsid protein forms a homotrimer, from which the VLPs are assembled. The protease is a homodimer, whose active site consists of two apposed aspartic acid residues. Post-translationally, initially, virus-like particles (VLPs) are composed of the structural unprocessed proteins Gag and Gag-Pol, and also contain the host initiator methionine tRNA (tRNA(i)-Met) which serves as a primer for minus-strand DNA synthesis, and a dimer of genomic Ty RNA. Processing of the polyproteins occurs within the particle and proceeds by an ordered pathway, called maturation. First, the protease (PR) is released by autocatalytic cleavage of the Gag-Pol polyprotein yielding capsid protein p45 and a Pol-p154 precursor protein. This cleavage is a prerequisite for subsequent processing of Pol-p154 at the remaining sites to release the mature structural and catalytic proteins. Maturation takes place prior to the RT reaction and is required to produce transposition-competent VLPs.

The protein localises to the cytoplasm. It localises to the nucleus. The enzyme catalyses DNA(n) + a 2'-deoxyribonucleoside 5'-triphosphate = DNA(n+1) + diphosphate. It carries out the reaction Endonucleolytic cleavage to 5'-phosphomonoester.. Its function is as follows. Capsid protein (CA) is the structural component of the virus-like particle (VLP), forming the shell that encapsulates the retrotransposons dimeric RNA genome. The particles are assembled from trimer-clustered units and there are holes in the capsid shells that allow for the diffusion of macromolecules. CA also has nucleocapsid-like chaperone activity, promoting primer tRNA(i)-Met annealing to the multipartite primer-binding site (PBS), dimerization of Ty1 RNA and initiation of reverse transcription. Functionally, the aspartyl protease (PR) mediates the proteolytic cleavages of the Gag and Gag-Pol polyproteins after assembly of the VLP. Reverse transcriptase/ribonuclease H (RT) is a multifunctional enzyme that catalyzes the conversion of the retro-elements RNA genome into dsDNA within the VLP. The enzyme displays a DNA polymerase activity that can copy either DNA or RNA templates, and a ribonuclease H (RNase H) activity that cleaves the RNA strand of RNA-DNA heteroduplexes during plus-strand synthesis and hydrolyzes RNA primers. The conversion leads to a linear dsDNA copy of the retrotransposon that includes long terminal repeats (LTRs) at both ends. In terms of biological role, integrase (IN) targets the VLP to the nucleus, where a subparticle preintegration complex (PIC) containing at least integrase and the newly synthesized dsDNA copy of the retrotransposon must transit the nuclear membrane. Once in the nucleus, integrase performs the integration of the dsDNA into the host genome. This chain is Transposon Ty1-GR1 Gag-Pol polyprotein (TY1B-GR1), found in Saccharomyces cerevisiae (strain ATCC 204508 / S288c) (Baker's yeast).